Consider the following 427-residue polypeptide: Glutamate-1-semialdehyde 2,1-aminomutase (427 aa).

N6-(pyridoxal phosphate)lysine is present on Lys-267.

This sequence belongs to the class-III pyridoxal-phosphate-dependent aminotransferase family. HemL subfamily. As to quaternary structure, homodimer. Pyridoxal 5'-phosphate is required as a cofactor.

The protein localises to the cytoplasm. The catalysed reaction is (S)-4-amino-5-oxopentanoate = 5-aminolevulinate. The protein operates within porphyrin-containing compound metabolism; protoporphyrin-IX biosynthesis; 5-aminolevulinate from L-glutamyl-tRNA(Glu): step 2/2. This is Glutamate-1-semialdehyde 2,1-aminomutase from Desulfosudis oleivorans (strain DSM 6200 / JCM 39069 / Hxd3) (Desulfococcus oleovorans).